Consider the following 254-residue polypeptide: D-aminoacyl-tRNA deacylase (254 aa).

Positions 61-83 (KPTLTVHTPGNLTEDNSHGGNPE) are disordered. Residues 65 to 74 (TVHTPGNLTE) show a composition bias toward polar residues.

The protein belongs to the DtdA deacylase family. Monomer. Zn(2+) serves as cofactor.

It catalyses the reaction a D-aminoacyl-tRNA + H2O = a tRNA + a D-alpha-amino acid + H(+). The enzyme catalyses glycyl-tRNA(Ala) + H2O = tRNA(Ala) + glycine + H(+). Functionally, D-aminoacyl-tRNA deacylase with broad substrate specificity. By recycling D-aminoacyl-tRNA to D-amino acids and free tRNA molecules, this enzyme counteracts the toxicity associated with the formation of D-aminoacyl-tRNA entities in vivo. In Methanococcus maripaludis (strain C7 / ATCC BAA-1331), this protein is D-aminoacyl-tRNA deacylase.